We begin with the raw amino-acid sequence, 291 residues long: Protease HtpX homolog (291 aa).

Helical transmembrane passes span 4-24 and 39-59; these read IVLFLATNLAIVLVLSLTMRL and TSLLIFAAVMGFGGSLISLAI. Residue His145 participates in Zn(2+) binding. The active site involves Glu146. His149 contacts Zn(2+). 2 helical membrane-spanning segments follow: residues 156 to 176 and 195 to 215; these read VTLALIQGVVNTFVMFLSRII and FFVTMIVAELVLGILASIIVM. Residue Glu222 participates in Zn(2+) binding.

This sequence belongs to the peptidase M48B family. It depends on Zn(2+) as a cofactor.

It localises to the cell inner membrane. This chain is Protease HtpX homolog, found in Thiobacillus denitrificans (strain ATCC 25259 / T1).